An 81-amino-acid polypeptide reads, in one-letter code: Elsinochrome C biosynthesis cluster protein SNOG_08613 (81 aa).

Part of the gene cluster that mediates the biosynthesis of elsinochrome C, a perelyenequinone phytotoxin structurally similar to cercosporin. The first step of elsinochrome C biosynthesis is performed by the polyketide synthase elcA which catalyzes the formation of nor-toralactone. The starter unit acyltransferase (SAT) domain of elcA initiates polyketide extension by the selective utilization of acetyl-CoA, which is elongated to the heptaketide in the beta-ketoacyl synthase (KS) domain by successive condensations with six malonyl units introduced by the malonyl acyltransferase (MAT) domain. The product template (PT) domain catalyzes C4-C9 and C2-C11 aldol cyclizations and dehydrations to a trihydroxynaphthalene, which is thought to be delivered to the thioesterase (TE) domain for product release. The bifunctional enzyme elcB then methylates nor-toralactone to toralactone before conducting an unusual oxidative aromatic ring opening. The next step in perylenequinone biosynthesis is an O-methylation at the nascent OH-6 of the elcB product performed by the O-methyltransferase elcD. The oxidative coupling of the two monomeric naphthol units in perylenequinone biosynthesis is catalyzed by the FAD-dependent monooxygenase elcE and the multicopper oxidase elcG. ElcG might catalyze the first intermolecular coupling in a regio- and stereo-selective manner via a phenol radical coupling mechanism and the elcE could forge the second C-C bond intramolecularly via a hydride transfer mechanism. The fasciclin domain-containing protein elcF might also play a role duting this step. The last piece of the puzzle in the biosynthesis of elsinochrome C is the additional annulation by enolate coupling to afford the dihydrobenzo(ghi)perylenequinone system, catalyzed by the FAD-dependent monooxygenase elcH. This is Elsinochrome C biosynthesis cluster protein SNOG_08613 from Phaeosphaeria nodorum (strain SN15 / ATCC MYA-4574 / FGSC 10173) (Glume blotch fungus).